Consider the following 316-residue polypeptide: Bifunctional peptidase and (3S)-lysyl hydroxylase JMJD7 (316 aa).

Cys-19 bears the Cysteine sulfenic acid (-SOH) mark. 2-oxoglutarate contacts are provided by Tyr-123 and Thr-172. Tyr-123 serves as a coordination point for succinate. Positions 124 to 310 (IQKQNSNLSV…YCYYRMLEQM (187 aa)) constitute a JmjC domain. Positions 175 and 177 each coordinate Fe cation. Asn-181, Tyr-183, and Lys-190 together coordinate 2-oxoglutarate. Residues Tyr-183 and Lys-190 each coordinate succinate. Residue His-278 coordinates Fe cation. Trp-292 is a binding site for 2-oxoglutarate.

In terms of assembly, homodimer; disulfide-linked. It depends on Fe(2+) as a cofactor. Expressed in the pars intercerebralis and fan-shaped body, regions known to be involved in sleep.

It localises to the nucleus. Its subcellular location is the cytoplasm. It catalyses the reaction L-lysyl-[protein] + 2-oxoglutarate + O2 = (3S)-3-hydroxy-L-lysyl-[protein] + succinate + CO2. Its function is as follows. Bifunctional enzyme that acts both as an endopeptidase and 2-oxoglutarate-dependent monooxygenase. Endopeptidase that cleaves histones N-terminal tails at the carboxyl side of methylated arginine or lysine residues, to generate 'tailless nucleosomes', which may trigger transcription elongation. Hydroxylates the guanylate binding protein 128up. May be involved in regulation of behavior and circadian rhythms. In Drosophila melanogaster (Fruit fly), this protein is Bifunctional peptidase and (3S)-lysyl hydroxylase JMJD7.